Consider the following 450-residue polypeptide: Bifunctional protein GlmU (450 aa).

Residues 1–229 (MRRHAIILAA…VEEIMGVNDR (229 aa)) are pyrophosphorylase. Residues 8 to 11 (LAAG), lysine 22, glutamine 72, and 77 to 78 (GT) each bind UDP-N-acetyl-alpha-D-glucosamine. Position 102 (aspartate 102) interacts with Mg(2+). Positions 139, 154, and 227 each coordinate UDP-N-acetyl-alpha-D-glucosamine. Mg(2+) is bound at residue asparagine 227. The tract at residues 230-250 (VMLSQAEKAMQRRTNHYHMLN) is linker. The tract at residues 251 to 450 (GVTIIDPDST…RQTTKEGYRK (200 aa)) is N-acetyltransferase. Residues arginine 332 and lysine 350 each contribute to the UDP-N-acetyl-alpha-D-glucosamine site. Catalysis depends on histidine 362, which acts as the Proton acceptor. Positions 365 and 376 each coordinate UDP-N-acetyl-alpha-D-glucosamine. Residues 385–386 (NY), alanine 422, and arginine 439 contribute to the acetyl-CoA site.

This sequence in the N-terminal section; belongs to the N-acetylglucosamine-1-phosphate uridyltransferase family. In the C-terminal section; belongs to the transferase hexapeptide repeat family. As to quaternary structure, homotrimer. Mg(2+) serves as cofactor.

It localises to the cytoplasm. The catalysed reaction is alpha-D-glucosamine 1-phosphate + acetyl-CoA = N-acetyl-alpha-D-glucosamine 1-phosphate + CoA + H(+). It carries out the reaction N-acetyl-alpha-D-glucosamine 1-phosphate + UTP + H(+) = UDP-N-acetyl-alpha-D-glucosamine + diphosphate. Its pathway is nucleotide-sugar biosynthesis; UDP-N-acetyl-alpha-D-glucosamine biosynthesis; N-acetyl-alpha-D-glucosamine 1-phosphate from alpha-D-glucosamine 6-phosphate (route II): step 2/2. It functions in the pathway nucleotide-sugar biosynthesis; UDP-N-acetyl-alpha-D-glucosamine biosynthesis; UDP-N-acetyl-alpha-D-glucosamine from N-acetyl-alpha-D-glucosamine 1-phosphate: step 1/1. The protein operates within bacterial outer membrane biogenesis; LPS lipid A biosynthesis. In terms of biological role, catalyzes the last two sequential reactions in the de novo biosynthetic pathway for UDP-N-acetylglucosamine (UDP-GlcNAc). The C-terminal domain catalyzes the transfer of acetyl group from acetyl coenzyme A to glucosamine-1-phosphate (GlcN-1-P) to produce N-acetylglucosamine-1-phosphate (GlcNAc-1-P), which is converted into UDP-GlcNAc by the transfer of uridine 5-monophosphate (from uridine 5-triphosphate), a reaction catalyzed by the N-terminal domain. This is Bifunctional protein GlmU from Staphylococcus aureus (strain Mu50 / ATCC 700699).